A 387-amino-acid chain; its full sequence is Monomeric sarcosine oxidase (387 aa).

Residue aspartate 6–phenylalanine 36 participates in FAD binding. Cysteine 316 carries the post-translational modification S-8alpha-FAD cysteine.

The protein belongs to the MSOX/MTOX family. MSOX subfamily. In terms of assembly, monomer. It depends on FAD as a cofactor.

It is found in the cytoplasm. It carries out the reaction sarcosine + O2 + H2O = formaldehyde + glycine + H2O2. Functionally, catalyzes the oxidative demethylation of sarcosine. The protein is Monomeric sarcosine oxidase (soxA) of Bacillus sp. (strain NS-129).